Consider the following 537-residue polypeptide: Extracellular exo-inulinase (537 aa).

A signal peptide spans 1 to 19; the sequence is MAPLSKALSVFMLMGITYA. Beta-D-fructose is bound by residues Asn40 and Asp41. Residue Asp41 is the Nucleophile of the active site. Asn49 carries N-linked (GlcNAc...) asparagine glycosylation. Residues Gln57 and Trp65 each coordinate beta-D-fructose. Asn67 carries N-linked (GlcNAc...) asparagine glycosylation. Ser103 serves as a coordination point for beta-D-fructose. N-linked (GlcNAc...) asparagine glycosylation is found at Asn111 and Asn112. 3 residues coordinate beta-D-fructose: Arg188, Asp189, and Glu241. The Proton donor/acceptor role is filled by Glu241. N-linked (GlcNAc...) asparagine glycans are attached at residues Asn254 and Asn300. Trp335 is a binding site for beta-D-fructose. Residues Asn398 and Asn430 are each glycosylated (N-linked (GlcNAc...) asparagine).

The protein belongs to the glycosyl hydrolase 32 family.

It localises to the secreted. It carries out the reaction Hydrolysis of terminal, non-reducing (2-&gt;1)- and (2-&gt;6)-linked beta-D-fructofuranose residues in fructans.. Its function is as follows. Exo-inulinase involved in utilization of the plant storage polymer inulin, consisting of fructooligosaccharides with a degree of polymerization (DP) value from 2 to 60. Splits off terminal fructose units successively from the non-reducing end of the inulin molecule, and also hydrolyzes levan, stachyose and raffinose. Hydrolyzes both beta-2,1- as well as beta-2,6-fructosyl linkages in fructooligosaccharides. In Aspergillus awamori (Black koji mold), this protein is Extracellular exo-inulinase.